A 118-amino-acid chain; its full sequence is NADPH-dependent 7-cyano-7-deazaguanine reductase (118 aa).

Residue Cys34 is the Thioimide intermediate of the active site. The active-site Proton donor is Asp41. Substrate contacts are provided by residues 56–58 (VEL) and 75–76 (HE).

It belongs to the GTP cyclohydrolase I family. QueF type 1 subfamily.

Its subcellular location is the cytoplasm. It carries out the reaction 7-aminomethyl-7-carbaguanine + 2 NADP(+) = 7-cyano-7-deazaguanine + 2 NADPH + 3 H(+). The protein operates within tRNA modification; tRNA-queuosine biosynthesis. In terms of biological role, catalyzes the NADPH-dependent reduction of 7-cyano-7-deazaguanine (preQ0) to 7-aminomethyl-7-deazaguanine (preQ1). This chain is NADPH-dependent 7-cyano-7-deazaguanine reductase, found in Halorhodospira halophila (strain DSM 244 / SL1) (Ectothiorhodospira halophila (strain DSM 244 / SL1)).